A 522-amino-acid polypeptide reads, in one-letter code: Serine/threonine protein phosphatase 2A 59 kDa regulatory subunit B' gamma isoform (522 aa).

The interval Met1 to Gln74 is disordered. Residues Pro35–Asn58 are compositionally biased toward low complexity. Over residues Ala63–Gln74 the composition is skewed to polar residues.

This sequence belongs to the phosphatase 2A regulatory subunit B56 family. In terms of assembly, PP2A consists of a common heteromeric enzyme, composed of a catalytic subunit (subunits C), a constant regulatory subunit (subunit A), and a variety of regulatory subunits such as subunits B (the R2/B/PR55/B55, R3/B''/PR72/PR130/PR59 and R5/B'/B56 families). Interacts with BRI1. Interacts with IGMT1 and IGMT4. Interacts with ACO3 in the cytosol. Expressed ubiquitously at low levels. Expressed in roots, emerging lateral roots, cotyledons, leaves, floral stalks and flowers.

Its subcellular location is the cytoplasm. The protein localises to the cytosol. The protein resides in the nucleus. Its function is as follows. The B regulatory subunit may modulate substrate selectivity and catalytic activity, and may also direct the localization of the catalytic enzyme to a particular subcellular compartment. Required for the formation of the PP2A holoenzyme that negatively regulates brassinosteroid signaling by dephosphorylating and inactivating BRI1 in the cytoplasm. Seems to be functionally connected with CPR5 and may mediate the negative regulation of defense reactions and senescence under low irradiances. May contribute to the epigenetic regulation of defense gene expression. Involved in the control of methoxylation of indole glucosinolates and formation of 4-methoxy- indol-3-yl-methyl glucosinolate in leaves, through direct interaction with indole glucosinolate methyltransferases. Involved in growth regulation and stress signaling. Involved in the regulation of reactive oxygen species (ROS) signaling and maintenance of cellular ROS homeostasis. Required to control the level of ACO3 phosphorylation in the cytoplasm. Regulates hydrogen peroxide metabolism by controlling the abundance of AOX1A and AXO3/AOX1D in leaf mitochondria. May mediate dephosphorylation of CRT1 and promote the degradation of unfolded proteins in endoplasmic reticulum (ER). Involved in the regulation of flowering time by repressing FLC, the main flowering repressor gene. This Arabidopsis thaliana (Mouse-ear cress) protein is Serine/threonine protein phosphatase 2A 59 kDa regulatory subunit B' gamma isoform (B'GAMMA).